Reading from the N-terminus, the 340-residue chain is PI-PLC X domain-containing protein 2 (340 aa).

A PI-PLC X-box domain is found at 42 to 215 (HLHNVPLSNL…KYQVLIFYHC (174 aa)). Catalysis depends on residues histidine 57 and histidine 132.

Expressed at highest levels in brain, followed by stomach and small intestine. Detected at low levels in kidney, ey, thymus and slkeletal muscle.

Its subcellular location is the nucleus. The enzyme catalyses a 1,2-diacyl-sn-glycero-3-phospho-(1D-myo-inositol) + H2O = 1D-myo-inositol 1-phosphate + a 1,2-diacyl-sn-glycerol + H(+). In terms of biological role, catalyzes the hydrolysis of inositol from phosphatidylinositol (1,2-diacyl-sn-glycero-3-phospho-(1D-myo-inositol), PI). Could also hydrolyze various multi-phosphorylated derivatives of PI, such as phosphatidylinositol-4,5 bisphosphate (PIP2), releasing inositol-1,4,5-trisphosphate (IP3) and the protein kinase C activator diacylglycerol (DAG), therefore mediating cell signaling. The sequence is that of PI-PLC X domain-containing protein 2 (Plcxd2) from Mus musculus (Mouse).